A 588-amino-acid polypeptide reads, in one-letter code: Adenine deaminase (588 aa).

It belongs to the metallo-dependent hydrolases superfamily. Adenine deaminase family. Homodimer. The cofactor is Mn(2+).

It catalyses the reaction adenine + H2O + H(+) = hypoxanthine + NH4(+). This Escherichia coli (strain 55989 / EAEC) protein is Adenine deaminase.